Consider the following 766-residue polypeptide: BMP/retinoic acid-inducible neural-specific protein 3 (766 aa).

Residues 1–33 (MIWRRRAGAELSSLMALWEWIVLSLHCWVLAVA) form the signal peptide. The 191-residue stretch at 74 to 264 (RYKIYREFGR…FVQAALSYIA (191 aa)) folds into the MACPF domain. N168, N337, N456, N562, N609, and N641 each carry an N-linked (GlcNAc...) asparagine glycan.

This sequence belongs to the BRINP family. Expressed in olfactory bulb, cerebellum and neuronal layers in hippocampus.

The protein resides in the secreted. Its subcellular location is the mitochondrion. In terms of biological role, inhibits neuronal cell proliferation by negative regulation of the cell cycle transition. Promotes pituitary gonadotrope cell proliferation, migration and invasion, when overexpressed. May play a role in cell pituitary tumor development. The chain is BMP/retinoic acid-inducible neural-specific protein 3 (Brinp3) from Rattus norvegicus (Rat).